A 51-amino-acid chain; its full sequence is Large ribosomal subunit protein eL39 (51 aa).

It belongs to the eukaryotic ribosomal protein eL39 family.

The protein is Large ribosomal subunit protein eL39 (rpl39e) of Pyrococcus abyssi (strain GE5 / Orsay).